Consider the following 4171-residue polypeptide: Cytoplasmic dynein 2 heavy chain 1 (4171 aa).

The segment at Met1–Glu1598 is stem. Gly115–Asn122 provides a ligand contact to ATP. Coiled-coil stretches lie at residues Ala164–Leu203, Lys629–Glu693, Asp829–Leu861, Glu927–Arg1048, and Ser1354–Lys1383. AAA stretches follow at residues Tyr1599 to Gly1823, Glu1883 to His2100, Val2184 to Ser2432, and Arg2527 to Tyr2767. ATP contacts are provided by residues Gly1637–Thr1644, Gly1921–Ser1928, Gly2226–Gln2233, and Gly2565–Arg2572. The segment at Gln2776–Ile3064 is stalk. Coiled coils occupy residues Glu2790–Gln2877, Glu2999–Arg3059, and Glu3308–Gln3336. 2 AAA regions span residues Ala3140–Lys3367 and Leu3575–Gln3784.

This sequence belongs to the dynein heavy chain family. The cytoplasmic dynein complex 2 is probably composed by a heavy chain che-3 homodimer and a number of light intermediate chains.

It is found in the cell projection. The protein resides in the cilium membrane. It localises to the cytoplasm. The protein localises to the cytoskeleton. In terms of biological role, functions as a motor for intraflagellar retrograde transport in chemosensory neurons. Functions in cilia biogenesis. The sequence is that of Cytoplasmic dynein 2 heavy chain 1 from Caenorhabditis elegans.